The primary structure comprises 345 residues: Adenosine kinase 2 (345 aa).

D300 is an active-site residue.

Belongs to the carbohydrate kinase PfkB family. In terms of assembly, interacts with the begomovirus AL2 protein and the curtovirus L2 protein. Interacts with KIN11. Requires Mg(2+) as cofactor. Phosphorylated by KIN11. Widely expressed.

It localises to the cytoplasm. It catalyses the reaction adenosine + ATP = AMP + ADP + H(+). It functions in the pathway purine metabolism; AMP biosynthesis via salvage pathway; AMP from adenosine: step 1/1. Its activity is regulated as follows. Inactivated by the begomovirus AL2 protein or the curtovirus L2 protein. Functionally, ATP dependent phosphorylation of adenosine and other related nucleoside analogs to monophosphate derivatives. Essential to sustain methyl recycling. The polypeptide is Adenosine kinase 2 (Arabidopsis thaliana (Mouse-ear cress)).